We begin with the raw amino-acid sequence, 864 residues long: DNA mismatch repair protein MutS (864 aa).

An ATP-binding site is contributed by 613–620 (GPNMGGKS).

The protein belongs to the DNA mismatch repair MutS family.

Functionally, this protein is involved in the repair of mismatches in DNA. It is possible that it carries out the mismatch recognition step. This protein has a weak ATPase activity. The sequence is that of DNA mismatch repair protein MutS from Actinobacillus pleuropneumoniae serotype 7 (strain AP76).